A 119-amino-acid polypeptide reads, in one-letter code: Dihydroneopterin aldolase (119 aa).

Residues E21, Y53, and 72-73 (VE) each bind substrate. K98 acts as the Proton donor/acceptor in catalysis.

It belongs to the DHNA family.

The enzyme catalyses 7,8-dihydroneopterin = 6-hydroxymethyl-7,8-dihydropterin + glycolaldehyde. Its pathway is cofactor biosynthesis; tetrahydrofolate biosynthesis; 2-amino-4-hydroxy-6-hydroxymethyl-7,8-dihydropteridine diphosphate from 7,8-dihydroneopterin triphosphate: step 3/4. Catalyzes the conversion of 7,8-dihydroneopterin to 6-hydroxymethyl-7,8-dihydropterin. The sequence is that of Dihydroneopterin aldolase (folB) from Streptomyces coelicolor (strain ATCC BAA-471 / A3(2) / M145).